A 169-amino-acid polypeptide reads, in one-letter code: ATP synthase subunit b (169 aa).

The chain crosses the membrane as a helical span at residues 3 to 23 (IKILLLVLPFFAFASEHGGVN).

It belongs to the ATPase B chain family. In terms of assembly, F-type ATPases have 2 components, F(1) - the catalytic core - and F(0) - the membrane proton channel. F(1) has five subunits: alpha(3), beta(3), gamma(1), delta(1), epsilon(1). F(0) has three main subunits: a(1), b(2) and c(10-14). The alpha and beta chains form an alternating ring which encloses part of the gamma chain. F(1) is attached to F(0) by a central stalk formed by the gamma and epsilon chains, while a peripheral stalk is formed by the delta and b chains.

It localises to the cell inner membrane. Its function is as follows. F(1)F(0) ATP synthase produces ATP from ADP in the presence of a proton or sodium gradient. F-type ATPases consist of two structural domains, F(1) containing the extramembraneous catalytic core and F(0) containing the membrane proton channel, linked together by a central stalk and a peripheral stalk. During catalysis, ATP synthesis in the catalytic domain of F(1) is coupled via a rotary mechanism of the central stalk subunits to proton translocation. Functionally, component of the F(0) channel, it forms part of the peripheral stalk, linking F(1) to F(0). This chain is ATP synthase subunit b, found in Campylobacter curvus (strain 525.92).